The chain runs to 191 residues: Protein GrpE (191 aa).

A compositionally biased stretch (basic and acidic residues) spans M1–E13. A disordered region spans residues M1–T40. The span at E14 to T40 shows a compositional bias: acidic residues.

This sequence belongs to the GrpE family. Homodimer.

Its subcellular location is the cytoplasm. Participates actively in the response to hyperosmotic and heat shock by preventing the aggregation of stress-denatured proteins, in association with DnaK and GrpE. It is the nucleotide exchange factor for DnaK and may function as a thermosensor. Unfolded proteins bind initially to DnaJ; upon interaction with the DnaJ-bound protein, DnaK hydrolyzes its bound ATP, resulting in the formation of a stable complex. GrpE releases ADP from DnaK; ATP binding to DnaK triggers the release of the substrate protein, thus completing the reaction cycle. Several rounds of ATP-dependent interactions between DnaJ, DnaK and GrpE are required for fully efficient folding. This is Protein GrpE from Listeria innocua serovar 6a (strain ATCC BAA-680 / CLIP 11262).